The chain runs to 265 residues: tRNA(His) guanylyltransferase (265 aa).

Mg(2+) is bound by residues Asp29, Gly30, and Asp76. GTP-binding positions include Asp29–His34 and Ser75–Asp76.

The protein belongs to the tRNA(His) guanylyltransferase family. Mg(2+) serves as cofactor.

The enzyme catalyses a 5'-end ribonucleotide-tRNA(His) + GTP + ATP + H2O = a 5'-end phospho-guanosine-ribonucleotide-tRNA(His) + AMP + 2 diphosphate + H(+). Its function is as follows. Adds a GMP to the 5'-end of tRNA(His) after transcription and RNase P cleavage. The polypeptide is tRNA(His) guanylyltransferase (THG1) (Debaryomyces hansenii (strain ATCC 36239 / CBS 767 / BCRC 21394 / JCM 1990 / NBRC 0083 / IGC 2968) (Yeast)).